We begin with the raw amino-acid sequence, 137 residues long: Small heat shock protein IbpA (137 aa).

In terms of domain architecture, sHSP spans 28 to 137 (NQSNGGYPPY…SLKPRRIEIK (110 aa)).

It belongs to the small heat shock protein (HSP20) family. Monomer. Forms homomultimers of about 100-150 subunits at optimal growth temperatures. Conformation changes to monomers at high temperatures or high ionic concentrations.

The protein localises to the cytoplasm. Functionally, associates with aggregated proteins, together with IbpB, to stabilize and protect them from irreversible denaturation and extensive proteolysis during heat shock and oxidative stress. Aggregated proteins bound to the IbpAB complex are more efficiently refolded and reactivated by the ATP-dependent chaperone systems ClpB and DnaK/DnaJ/GrpE. Its activity is ATP-independent. The protein is Small heat shock protein IbpA of Yersinia pseudotuberculosis serotype O:1b (strain IP 31758).